The sequence spans 434 residues: Threonylcarbamoyladenosine tRNA methylthiotransferase MtaB (434 aa).

Residues 2 to 112 (KTVRIETFGC…IVDHINSLNG (111 aa)) form the MTTase N-terminal domain. Positions 11, 46, 77, 147, 151, and 154 each coordinate [4Fe-4S] cluster. The Radical SAM core domain occupies 133–362 (FEDRTRSYIK…KEKAKDVSIR (230 aa)).

This sequence belongs to the methylthiotransferase family. MtaB subfamily. Requires [4Fe-4S] cluster as cofactor.

The protein localises to the cytoplasm. It catalyses the reaction N(6)-L-threonylcarbamoyladenosine(37) in tRNA + (sulfur carrier)-SH + AH2 + 2 S-adenosyl-L-methionine = 2-methylsulfanyl-N(6)-L-threonylcarbamoyladenosine(37) in tRNA + (sulfur carrier)-H + 5'-deoxyadenosine + L-methionine + A + S-adenosyl-L-homocysteine + 2 H(+). Its function is as follows. Catalyzes the methylthiolation of N6-threonylcarbamoyladenosine (t(6)A), leading to the formation of 2-methylthio-N6-threonylcarbamoyladenosine (ms(2)t(6)A) at position 37 in tRNAs that read codons beginning with adenine. This is Threonylcarbamoyladenosine tRNA methylthiotransferase MtaB (mtaB) from Thermotoga maritima (strain ATCC 43589 / DSM 3109 / JCM 10099 / NBRC 100826 / MSB8).